A 364-amino-acid chain; its full sequence is Aspartate aminotransferase (364 aa).

The L-aspartate site is built by glycine 23, tryptophan 99, and asparagine 143. Lysine 200 bears the N6-(pyridoxal phosphate)lysine mark. L-aspartate is bound at residue arginine 320.

Belongs to the class-I pyridoxal-phosphate-dependent aminotransferase family. Homodimer. Pyridoxal 5'-phosphate is required as a cofactor.

The protein resides in the cytoplasm. It catalyses the reaction L-aspartate + 2-oxoglutarate = oxaloacetate + L-glutamate. The polypeptide is Aspartate aminotransferase (aspC) (Thermococcus kodakarensis (strain ATCC BAA-918 / JCM 12380 / KOD1) (Pyrococcus kodakaraensis (strain KOD1))).